The following is a 434-amino-acid chain: Putative magnesium transporter MRS2-D (434 aa).

2 disordered regions span residues 126-171 (AASP…DGEA) and 279-311 (EASE…AGGG). Over residues 279–291 (EASELEDHSSRDE) the composition is skewed to basic and acidic residues. The next 2 helical transmembrane spans lie at 367–387 (GILL…TGVF) and 405–425 (FPCA…AALL).

The protein belongs to the CorA metal ion transporter (MIT) (TC 1.A.35.5) family.

Its subcellular location is the membrane. Its function is as follows. Putative magnesium transporter. The polypeptide is Putative magnesium transporter MRS2-D (MRS2-D) (Oryza sativa subsp. japonica (Rice)).